A 236-amino-acid chain; its full sequence is Opacity protein opA50 (236 aa).

Alanine 1 is a signal peptide.

The protein belongs to the opacity porin family.

It localises to the cell outer membrane. Functionally, implicated in a number of adherence functions. OPA proteins are implicated in pathogenesis and are subject to phase variation. This Neisseria gonorrhoeae protein is Opacity protein opA50 (opaC).